The chain runs to 340 residues: Sulfotransferase 2B1 (340 aa).

67–72 (KSGTNW) is a binding site for 3'-phosphoadenylyl sulfate. Substrate-binding residues include W95 and W100. Residue H122 is the Proton acceptor of the active site. 3'-phosphoadenylyl sulfate is bound by residues R144, S152, Y207, 241-246 (SAFAAM), and 271-273 (RKG). A disordered region spans residues 301–340 (LPSFPWDRSAEDGSPDGETEPSPSPSPGLASDDPNPGSSQ).

This sequence belongs to the sulfotransferase 1 family. Isoform 1 is expressed in skin and testis. Higher level of isoform 2 expressed in skin and intestine, moderate level in the kidney, low level in liver, stomach and placenta.

The protein localises to the cytoplasm. It is found in the cytosol. The protein resides in the microsome. It localises to the nucleus. It carries out the reaction an alcohol + 3'-phosphoadenylyl sulfate = an alkyl sulfate + adenosine 3',5'-bisphosphate + H(+). It catalyses the reaction pregnenolone + 3'-phosphoadenylyl sulfate = pregnenolone sulfate + adenosine 3',5'-bisphosphate + H(+). The enzyme catalyses 3beta-hydroxyandrost-5-en-17-one + 3'-phosphoadenylyl sulfate = dehydroepiandrosterone 3-sulfate + adenosine 3',5'-bisphosphate + H(+). The catalysed reaction is cholesterol + 3'-phosphoadenylyl sulfate = cholesterol sulfate + adenosine 3',5'-bisphosphate + H(+). In terms of biological role, sulfotransferase that utilizes 3'-phospho-5'-adenylyl sulfate (PAPS) as sulfonate donor to catalyze the sulfate conjugation. Sulfonation increases the water solubility of most compounds, and therefore their renal excretion, but it can also result in bioactivation to form active metabolites. Sulfonates cholesterol. Catalyzes sulfation of the 3beta-hydroxyl groups of steroids, such as, pregnenolone and dehydroepiandrosterone (DHEA). Conjugates efficiently cholesterol but has a greater affinity for pregnenolone sulfation. Does not show high activity with DHEA. Plays a role in epidermal cholesterol metabolism and in the regulation of epidermal proliferation and differentiation. Its function is as follows. Prefers pregnenolone over DHEA as a substrate and does not sulfate cholesterol. The protein is Sulfotransferase 2B1 of Rattus norvegicus (Rat).